A 110-amino-acid chain; its full sequence is UPF0060 membrane protein Ajs_2087 (110 aa).

Transmembrane regions (helical) follow at residues 7-27 (LALFLLTAVAEIVGCYLPWLW), 33-53 (SAWLLVPAAASLALFAWLLTL), 63-83 (AAYGGVYVAVALVWLWTVDGV), and 86-106 (GPWDWLGVAVTLCGMAIIAFA).

Belongs to the UPF0060 family.

It is found in the cell inner membrane. In Acidovorax sp. (strain JS42), this protein is UPF0060 membrane protein Ajs_2087.